A 379-amino-acid polypeptide reads, in one-letter code: Cytochrome b (379 aa).

4 consecutive transmembrane segments (helical) span residues 34–54 (FGSL…LLAM), 78–99 (WLIR…YLHI), 114–134 (WNTG…GYVL), and 179–199 (FFAL…IHLT). Residues H84 and H98 each coordinate heme b. Heme b contacts are provided by H183 and H197. Residue H202 coordinates a ubiquinone. 4 consecutive transmembrane segments (helical) span residues 227-247 (LKDI…AFFS), 289-309 (LGGV…PFLH), 321-341 (LSQV…WIGS), and 348-368 (FIII…ILFP).

Belongs to the cytochrome b family. As to quaternary structure, the cytochrome bc1 complex contains 11 subunits: 3 respiratory subunits (MT-CYB, CYC1 and UQCRFS1), 2 core proteins (UQCRC1 and UQCRC2) and 6 low-molecular weight proteins (UQCRH/QCR6, UQCRB/QCR7, UQCRQ/QCR8, UQCR10/QCR9, UQCR11/QCR10 and a cleavage product of UQCRFS1). This cytochrome bc1 complex then forms a dimer. It depends on heme b as a cofactor.

Its subcellular location is the mitochondrion inner membrane. Functionally, component of the ubiquinol-cytochrome c reductase complex (complex III or cytochrome b-c1 complex) that is part of the mitochondrial respiratory chain. The b-c1 complex mediates electron transfer from ubiquinol to cytochrome c. Contributes to the generation of a proton gradient across the mitochondrial membrane that is then used for ATP synthesis. The sequence is that of Cytochrome b (MT-CYB) from Casuarius bennetti (Dwarf cassowary).